Here is a 1297-residue protein sequence, read N- to C-terminus: DNA-directed RNA polymerase subunit beta'' (1297 aa).

Positions 220, 293, 300, and 303 each coordinate Zn(2+). Residues 1278–1288 (RRRKQNTKTRK) are compositionally biased toward basic residues. Positions 1278–1297 (RRRKQNTKTRKNNLFSLNEK) are disordered.

The protein belongs to the RNA polymerase beta' chain family. RpoC2 subfamily. As to quaternary structure, in plastids the minimal PEP RNA polymerase catalytic core is composed of four subunits: alpha, beta, beta', and beta''. When a (nuclear-encoded) sigma factor is associated with the core the holoenzyme is formed, which can initiate transcription. The cofactor is Zn(2+).

Its subcellular location is the plastid. The protein localises to the chloroplast. The catalysed reaction is RNA(n) + a ribonucleoside 5'-triphosphate = RNA(n+1) + diphosphate. In terms of biological role, DNA-dependent RNA polymerase catalyzes the transcription of DNA into RNA using the four ribonucleoside triphosphates as substrates. The polypeptide is DNA-directed RNA polymerase subunit beta'' (Welwitschia mirabilis (Tree tumbo)).